Reading from the N-terminus, the 350-residue chain is C5a anaphylatoxin chemotactic receptor 1 (350 aa).

Residues 1–37 (MDDMCSILTEEELSLYNITDCEFVKPGGLGPVLGPRH) lie on the Extracellular side of the membrane. A glycan (N-linked (GlcNAc...) asparagine) is linked at Asn-17. A helical membrane pass occupies residues 38-64 (LSALVFYGLVFLLGVPGNALVVWVTGF). At 65 to 69 (RMPRS) the chain is on the cytoplasmic side. A helical transmembrane segment spans residues 70 to 93 (VTSLWFLNLALADLLCCLSLPLLM). Residues 94–110 (VPLAMDQHWPFGPVACK) are Extracellular-facing. An intrachain disulfide couples Cys-109 to Cys-187. Residues 111 to 132 (LLKGLLYLIMFCSVLLLVLISL) traverse the membrane as a helical segment. The Cytoplasmic portion of the chain corresponds to 133–154 (DRFLLVSWPVWCQNWRRPRKAG). A helical transmembrane segment spans residues 155–174 (WVCVGVWLLALLGSIPQFVY). Topologically, residues 175 to 197 (VKEVQLSTSKSECLGLYTVASAW) are extracellular. Residues 198 to 223 (ANTTARFLVGFVLPFITIVTCHWVVY) traverse the membrane as a helical segment. Residues 224–247 (SRARRGSGVGPGRVSEARSRRTLR) lie on the Cytoplasmic side of the membrane. A helical membrane pass occupies residues 248 to 270 (VIVAVSLSFFLCWFPLHILDFLV). Residues 271-287 (LSTPRHSSHSANIQLAH) are Extracellular-facing. A helical transmembrane segment spans residues 288–308 (TLALCLAYCNSCLNPLLYVCL). The Cytoplasmic segment spans residues 309–350 (GRGFKQNINRSLRNMFNFATEESVTRQSMFKSTSERTQEMNM).

This sequence belongs to the G-protein coupled receptor 1 family. High expression in head, kidney and posterior kidney, lower levels in peripheral blood leukocytes and spleen, low expression in brain and gills, heart, intestine and very low expression in liver and muscle.

It is found in the cell membrane. Functionally, receptor for the chemotactic and inflammatory peptide anaphylatoxin C5a. This receptor stimulates chemotaxis, granule enzyme release and superoxide anion production. This chain is C5a anaphylatoxin chemotactic receptor 1 (c5ar1), found in Oncorhynchus mykiss (Rainbow trout).